Here is a 707-residue protein sequence, read N- to C-terminus: Integrator complex subunit 13 (707 aa).

The span at 565-625 (PPEEEERKKR…AEAEVIKDSP (61 aa)) shows a compositional bias: basic and acidic residues. Positions 565–651 (PPEEEERKKR…TGPAEKSKGP (87 aa)) are disordered. Positions 567–622 (EEEERKKRGRKREDKEEKAEKPPKENEHEKKWQESERVKSVLDREKEDLAEAEVIK) form a coiled coil. Residues 573–583 (KRGRKREDKEE) carry the Nuclear localization signal (NLS) motif. Residues 650-695 (GPMSLLSLWSSRINTANSRKHQEFVGRLNSVNNKAELYQHLKEENG) are cleavage module binding motif (CMBM).

Belongs to the Integrator subunit 13 family. In terms of assembly, component of the Integrator complex, composed of core subunits INTS1, INTS2, INTS3, INTS4, INTS5, INTS6, INTS7, INTS8, INTS9/RC74, INTS10, INTS11/CPSF3L, INTS12, INTS13, INTS14 and INTS15. The core complex associates with protein phosphatase 2A subunits PPP2CA and PPP2R1A, to form the Integrator-PP2A (INTAC) complex. INTS13 is part of the tail subcomplex, composed of INTS10, INTS13, INTS14 and INTS15.

It is found in the nucleus. It localises to the cytoplasm. Functionally, component of the integrator complex, a multiprotein complex that terminates RNA polymerase II (Pol II) transcription in the promoter-proximal region of genes. The integrator complex provides a quality checkpoint during transcription elongation by driving premature transcription termination of transcripts that are unfavorably configured for transcriptional elongation: the complex terminates transcription by (1) catalyzing dephosphorylation of the C-terminal domain (CTD) of Pol II subunit POLR2A/RPB1 and SUPT5H/SPT5, (2) degrading the exiting nascent RNA transcript via endonuclease activity and (3) promoting the release of Pol II from bound DNA. The integrator complex is also involved in terminating the synthesis of non-coding Pol II transcripts, such as enhancer RNAs (eRNAs), small nuclear RNAs (snRNAs), telomerase RNAs and long non-coding RNAs (lncRNAs). Within the integrator complex, INTS13 is part of the integrator tail module and acts as a platform for the recruitment of transcription factors at promoters. The polypeptide is Integrator complex subunit 13 (Xenopus tropicalis (Western clawed frog)).